The sequence spans 145 residues: MALLCFNSFTTTPVTSSSSLFPHPTANPISRVRIGLPTNCLKGFRILTPIVQKPRKNSIFIASAAAGADSNVADGVEESESKKESDVVSVDKLPLESKLKEREERMLKMKLAKKIRLKRKRLVQKRRLRKKGNWPPSKMKKLEGV.

Residues 1–63 (MALLCFNSFT…PRKNSIFIAS (63 aa)) constitute a chloroplast transit peptide. A disordered region spans residues 125–145 (KRRLRKKGNWPPSKMKKLEGV).

The protein belongs to the chloroplast-specific ribosomal protein cL37 family. Part of the 50S ribosomal subunit.

It is found in the plastid. It localises to the chloroplast. This is Large ribosomal subunit protein cL37 (PSRP5) from Pisum sativum (Garden pea).